The primary structure comprises 191 residues: 3-isopropylmalate dehydratase small subunit (191 aa).

The protein belongs to the LeuD family. LeuD type 1 subfamily. Heterodimer of LeuC and LeuD.

The catalysed reaction is (2R,3S)-3-isopropylmalate = (2S)-2-isopropylmalate. It functions in the pathway amino-acid biosynthesis; L-leucine biosynthesis; L-leucine from 3-methyl-2-oxobutanoate: step 2/4. Functionally, catalyzes the isomerization between 2-isopropylmalate and 3-isopropylmalate, via the formation of 2-isopropylmaleate. The polypeptide is 3-isopropylmalate dehydratase small subunit (Staphylococcus haemolyticus (strain JCSC1435)).